The chain runs to 167 residues: UPF0179 protein Pisl_0688 (167 aa).

Belongs to the UPF0179 family.

This is UPF0179 protein Pisl_0688 from Pyrobaculum islandicum (strain DSM 4184 / JCM 9189 / GEO3).